Consider the following 359-residue polypeptide: Acyl-CoA Delta-9 desaturase (359 aa).

Helical transmembrane passes span 51–71 and 74–94; these read VILF…AFTS and IATT…ITGG. Fe cation is bound by residues H96, H101, H133, H136, and H137. Positions 96–101 match the Histidine box-1 motif; sequence HRLWAH. Positions 133–137 match the Histidine box-2 motif; the sequence is HRVHH. 2 helical membrane-spanning segments follow: residues 194–214 and 222–244; these read YLIL…VYMW and WFVA…NSAA. Residues H245, H274, H277, and H278 each contribute to the Fe cation site. The short motif at 274-278 is the Histidine box-3 element; the sequence is HNYHH.

The protein belongs to the fatty acid desaturase type 1 family. The cofactor is Fe(2+).

The protein localises to the membrane. It catalyses the reaction octadecanoyl-CoA + 2 Fe(II)-[cytochrome b5] + O2 + 2 H(+) = (9Z)-octadecenoyl-CoA + 2 Fe(III)-[cytochrome b5] + 2 H2O. The enzyme catalyses hexadecanoyl-CoA + 2 Fe(II)-[cytochrome b5] + O2 + 2 H(+) = (9Z)-hexadecenoyl-CoA + 2 Fe(III)-[cytochrome b5] + 2 H2O. Its function is as follows. Catalyzes the formation of a Delta9 double bond, acting on saturated fatty acyl substrates like palmitoyl-CoA (hexadecanoyl-CoA) and stearoyl-CoA (octadecanoyl-CoA) with higher desaturation activity on octadecanoyl-CoA than hexadecanoyl-CoA. This is Acyl-CoA Delta-9 desaturase from Acheta domesticus (House cricket).